The primary structure comprises 907 residues: Envelope glycoprotein B (907 aa).

Residues 1-24 (MESRIWCLVVCVNLCIVCLGAAVS) form the signal peptide. At 25-751 (SSSTRGTSAT…EGVATFLKNP (727 aa)) the chain is on the virion surface side. Residues 29 to 62 (RGTSATHSHHSSHTTSAAHSRSGSVSQRVTSSQT) form a disordered region. Positions 41-62 (HTTSAAHSRSGSVSQRVTSSQT) are enriched in low complexity. N68, N73, and N85 each carry an N-linked (GlcNAc...) asparagine; by host glycan. Cystine bridges form between C94–C551, C111–C507, C185–C250, and C344–C391. The involved in fusion and/or binding to host membrane stretch occupies residues 152–158 (SYAYIHT). N-linked (GlcNAc...) asparagine; by host glycosylation is present at N208. An involved in fusion and/or binding to host membrane region spans residues 237–244 (GSTWLYRE). N-linked (GlcNAc...) asparagine; by host glycans are attached at residues N281, N286, N302, N341, N383, N405, N409, N417, N447, N452, N456, N466, N555, and N586. C574 and C611 form a disulfide bridge. A hydrophobic membrane proximal region region spans residues 697–749 (VEDKVVDPLPPYLKGLDDLMSGLGAAGKAVGVAIGAVGGAVASVVEGVATFLK). Residues 752 to 772 (FGAFTIILVAIAVVIITYLIY) traverse the membrane as a helical segment. Residues 773–907 (TRQRRLCTQP…LKDSDEEENV (135 aa)) are Intravirion-facing. Composition is skewed to polar residues over residues 798-810 (VTSGSTKDTSLQA) and 860-877 (RAQQNGTDSLDGRTGTQD). Disordered regions lie at residues 798–838 (VTSG…TAAP) and 857–907 (AEQR…EENV). Residues 878–887 (KGQKPNLLDR) are compositionally biased toward basic and acidic residues. Positions 895-898 (YRHL) match the Internalization motif motif.

It belongs to the herpesviridae glycoprotein B family. As to quaternary structure, homotrimer; disulfide-linked. Binds to heparan sulfate proteoglycans. Interacts with gH/gL heterodimer. Post-translationally, a proteolytic cleavage by host furin generates two subunits that remain linked by disulfide bonds.

The protein resides in the virion membrane. It is found in the host cell membrane. The protein localises to the host endosome membrane. Its subcellular location is the host Golgi apparatus membrane. Envelope glycoprotein that forms spikes at the surface of virion envelope. Essential for the initial attachment to heparan sulfate moieties of the host cell surface proteoglycans. Involved in fusion of viral and cellular membranes leading to virus entry into the host cell. Following initial binding to its host receptors, membrane fusion is mediated by the fusion machinery composed at least of gB and the heterodimer gH/gL. May be involved in the fusion between the virion envelope and the outer nuclear membrane during virion egress. This chain is Envelope glycoprotein B, found in Human cytomegalovirus (strain Merlin) (HHV-5).